We begin with the raw amino-acid sequence, 180 residues long: ATP synthase subunit delta (180 aa).

It belongs to the ATPase delta chain family. As to quaternary structure, F-type ATPases have 2 components, F(1) - the catalytic core - and F(0) - the membrane proton channel. F(1) has five subunits: alpha(3), beta(3), gamma(1), delta(1), epsilon(1). F(0) has three main subunits: a(1), b(2) and c(10-14). The alpha and beta chains form an alternating ring which encloses part of the gamma chain. F(1) is attached to F(0) by a central stalk formed by the gamma and epsilon chains, while a peripheral stalk is formed by the delta and b chains.

The protein localises to the cell membrane. In terms of biological role, f(1)F(0) ATP synthase produces ATP from ADP in the presence of a proton or sodium gradient. F-type ATPases consist of two structural domains, F(1) containing the extramembraneous catalytic core and F(0) containing the membrane proton channel, linked together by a central stalk and a peripheral stalk. During catalysis, ATP synthesis in the catalytic domain of F(1) is coupled via a rotary mechanism of the central stalk subunits to proton translocation. Its function is as follows. This protein is part of the stalk that links CF(0) to CF(1). It either transmits conformational changes from CF(0) to CF(1) or is implicated in proton conduction. The protein is ATP synthase subunit delta of Caldicellulosiruptor bescii (strain ATCC BAA-1888 / DSM 6725 / KCTC 15123 / Z-1320) (Anaerocellum thermophilum).